The chain runs to 37 residues: Large ribosomal subunit protein bL36c (37 aa).

Belongs to the bacterial ribosomal protein bL36 family.

It is found in the plastid. Its subcellular location is the chloroplast. The chain is Large ribosomal subunit protein bL36c from Ostreococcus tauri.